The sequence spans 357 residues: Peptide chain release factor 1 (357 aa).

Residue Gln-235 is modified to N5-methylglutamine. Basic and acidic residues predominate over residues Arg-282–Arg-294. A disordered region spans residues Arg-282–Thr-308.

It belongs to the prokaryotic/mitochondrial release factor family. In terms of processing, methylated by PrmC. Methylation increases the termination efficiency of RF1.

The protein localises to the cytoplasm. Peptide chain release factor 1 directs the termination of translation in response to the peptide chain termination codons UAG and UAA. The polypeptide is Peptide chain release factor 1 (Brucella anthropi (strain ATCC 49188 / DSM 6882 / CCUG 24695 / JCM 21032 / LMG 3331 / NBRC 15819 / NCTC 12168 / Alc 37) (Ochrobactrum anthropi)).